The following is a 353-amino-acid chain: Phospho-N-acetylmuramoyl-pentapeptide-transferase (353 aa).

A run of 10 helical transmembrane segments spans residues 22–42 (FAFF…ITWA), 65–85 (TPTM…LSCI), 88–108 (DNIF…IGLI), 129–149 (LLTQ…SSEL), 161–181 (PLFD…ISSS), 192–212 (GLAT…LYLS), 228–248 (GLGE…GFLW), 256–276 (VFMG…LAII), 281–301 (ILLL…ILQV), and 330–350 (KIIV…LASI).

It belongs to the glycosyltransferase 4 family. MraY subfamily. The cofactor is Mg(2+).

The protein localises to the cell inner membrane. It carries out the reaction UDP-N-acetyl-alpha-D-muramoyl-L-alanyl-gamma-D-glutamyl-meso-2,6-diaminopimeloyl-D-alanyl-D-alanine + di-trans,octa-cis-undecaprenyl phosphate = di-trans,octa-cis-undecaprenyl diphospho-N-acetyl-alpha-D-muramoyl-L-alanyl-D-glutamyl-meso-2,6-diaminopimeloyl-D-alanyl-D-alanine + UMP. The protein operates within cell wall biogenesis; peptidoglycan biosynthesis. Catalyzes the initial step of the lipid cycle reactions in the biosynthesis of the cell wall peptidoglycan: transfers peptidoglycan precursor phospho-MurNAc-pentapeptide from UDP-MurNAc-pentapeptide onto the lipid carrier undecaprenyl phosphate, yielding undecaprenyl-pyrophosphoryl-MurNAc-pentapeptide, known as lipid I. The protein is Phospho-N-acetylmuramoyl-pentapeptide-transferase of Campylobacter jejuni subsp. jejuni serotype O:23/36 (strain 81-176).